The chain runs to 1009 residues: DNA polymerase catalytic subunit (1009 aa).

This sequence belongs to the DNA polymerase type-B family.

The protein resides in the host nucleus. The catalysed reaction is DNA(n) + a 2'-deoxyribonucleoside 5'-triphosphate = DNA(n+1) + diphosphate. This Saimiri sciureus (Common squirrel monkey) protein is DNA polymerase catalytic subunit (9).